The following is a 193-amino-acid chain: Ion-translocating oxidoreductase complex subunit A (193 aa).

6 consecutive transmembrane segments (helical) span residues L5–L25, I39–V59, L67–F87, L102–L122, I134–M154, and S171–V191.

This sequence belongs to the NqrDE/RnfAE family. As to quaternary structure, the complex is composed of six subunits: RnfA, RnfB, RnfC, RnfD, RnfE and RnfG.

The protein resides in the cell inner membrane. In terms of biological role, part of a membrane-bound complex that couples electron transfer with translocation of ions across the membrane. This chain is Ion-translocating oxidoreductase complex subunit A, found in Vibrio cholerae serotype O1 (strain ATCC 39315 / El Tor Inaba N16961).